The following is a 111-amino-acid chain: Translation initiation factor 1A (111 aa).

Residues 12–86 (GEMPLPSEDE…KKGEVVYRYL (75 aa)) form the S1-like domain.

Belongs to the eIF-1A family.

Seems to be required for maximal rate of protein biosynthesis. Enhances ribosome dissociation into subunits and stabilizes the binding of the initiator Met-tRNA(I) to 40 S ribosomal subunits. The sequence is that of Translation initiation factor 1A (eIF1A) from Aeropyrum pernix (strain ATCC 700893 / DSM 11879 / JCM 9820 / NBRC 100138 / K1).